We begin with the raw amino-acid sequence, 196 residues long: FMN-dependent NADH:quinone oxidoreductase (196 aa).

Serine 10 serves as a coordination point for FMN.

Belongs to the azoreductase type 1 family. As to quaternary structure, homodimer. FMN is required as a cofactor.

The enzyme catalyses 2 a quinone + NADH + H(+) = 2 a 1,4-benzosemiquinone + NAD(+). It carries out the reaction N,N-dimethyl-1,4-phenylenediamine + anthranilate + 2 NAD(+) = 2-(4-dimethylaminophenyl)diazenylbenzoate + 2 NADH + 2 H(+). Functionally, quinone reductase that provides resistance to thiol-specific stress caused by electrophilic quinones. Its function is as follows. Also exhibits azoreductase activity. Catalyzes the reductive cleavage of the azo bond in aromatic azo compounds to the corresponding amines. The protein is FMN-dependent NADH:quinone oxidoreductase of Cereibacter sphaeroides (strain KD131 / KCTC 12085) (Rhodobacter sphaeroides).